The chain runs to 295 residues: Ribosomal RNA small subunit methyltransferase A (295 aa).

The S-adenosyl-L-methionine site is built by asparagine 29, leucine 31, glycine 56, glutamate 77, aspartate 102, and asparagine 128.

Belongs to the class I-like SAM-binding methyltransferase superfamily. rRNA adenine N(6)-methyltransferase family. RsmA subfamily.

It is found in the cytoplasm. The enzyme catalyses adenosine(1518)/adenosine(1519) in 16S rRNA + 4 S-adenosyl-L-methionine = N(6)-dimethyladenosine(1518)/N(6)-dimethyladenosine(1519) in 16S rRNA + 4 S-adenosyl-L-homocysteine + 4 H(+). Its function is as follows. Specifically dimethylates two adjacent adenosines (A1518 and A1519) in the loop of a conserved hairpin near the 3'-end of 16S rRNA in the 30S particle. May play a critical role in biogenesis of 30S subunits. This chain is Ribosomal RNA small subunit methyltransferase A, found in Listeria welshimeri serovar 6b (strain ATCC 35897 / DSM 20650 / CCUG 15529 / CIP 8149 / NCTC 11857 / SLCC 5334 / V8).